The chain runs to 418 residues: D-inositol 3-phosphate glycosyltransferase 1 (418 aa).

Residues 24-25 and glycine 32 contribute to the UDP-N-acetyl-alpha-D-glucosamine site; that span reads QP. 1D-myo-inositol 3-phosphate contacts are provided by residues 29–34, lysine 87, histidine 115, serine 139, and glutamine 159; that span reads DAGGLN. UDP-N-acetyl-alpha-D-glucosamine-binding residues include arginine 233 and lysine 238. The Mg(2+) site is built by tyrosine 308, arginine 309, and alanine 311. Positions 321 and 329 each coordinate UDP-N-acetyl-alpha-D-glucosamine. Threonine 335 is a Mg(2+) binding site.

Belongs to the glycosyltransferase group 1 family. MshA subfamily. Homodimer.

The enzyme catalyses 1D-myo-inositol 3-phosphate + UDP-N-acetyl-alpha-D-glucosamine = 1D-myo-inositol 2-acetamido-2-deoxy-alpha-D-glucopyranoside 3-phosphate + UDP + H(+). In terms of biological role, catalyzes the transfer of a N-acetyl-glucosamine moiety to 1D-myo-inositol 3-phosphate to produce 1D-myo-inositol 2-acetamido-2-deoxy-glucopyranoside 3-phosphate in the mycothiol biosynthesis pathway. The chain is D-inositol 3-phosphate glycosyltransferase 1 from Catenulispora acidiphila (strain DSM 44928 / JCM 14897 / NBRC 102108 / NRRL B-24433 / ID139908).